Here is a 430-residue protein sequence, read N- to C-terminus: Protein POLLENLESS 3-LIKE 2 (430 aa).

The segment at 1 to 21 is disordered; it reads MMRDVFRPTKSAPCSPAKPLG. TPR repeat units lie at residues 40–73, 74–107, 110–143, 170–203, 205–236, and 238–257; these read DSPY…GDRV, DSAL…CSDQ, ESLD…IQKG, TRLL…APDN, KMCN…VVDG, and RGVD…LNDL. The stretch at 81–107 forms a coiled coil; sequence AIVMKQQNRAEEAIEAIKSLRVRCSDQ. The segment at 346–376 is disordered; that stretch reads KLKRTRSSSQGMGMLSGIGGDHEGETNTSTR.

Belongs to the MS5 protein family.

The protein localises to the nucleus. In terms of biological role, probably involved in the regulation of cell division. The protein is Protein POLLENLESS 3-LIKE 2 of Arabidopsis thaliana (Mouse-ear cress).